The primary structure comprises 624 residues: UvrABC system protein C (624 aa).

In terms of domain architecture, GIY-YIG spans 25–104; the sequence is AEPGVYFMRD…IKQHQPHFNV (80 aa). The region spanning 214–249 is the UVR domain; it reads SELIDTLTPQMEAAAENLNFEQAARIRDQINGLKTL.

The protein belongs to the UvrC family. Interacts with UvrB in an incision complex.

It localises to the cytoplasm. The UvrABC repair system catalyzes the recognition and processing of DNA lesions. UvrC both incises the 5' and 3' sides of the lesion. The N-terminal half is responsible for the 3' incision and the C-terminal half is responsible for the 5' incision. The polypeptide is UvrABC system protein C (Cyanothece sp. (strain PCC 7425 / ATCC 29141)).